Here is a 308-residue protein sequence, read N- to C-terminus: Ribosomal protein L11 methyltransferase (308 aa).

S-adenosyl-L-methionine-binding residues include T160, G181, D203, and N245.

The protein belongs to the methyltransferase superfamily. PrmA family.

It is found in the cytoplasm. It carries out the reaction L-lysyl-[protein] + 3 S-adenosyl-L-methionine = N(6),N(6),N(6)-trimethyl-L-lysyl-[protein] + 3 S-adenosyl-L-homocysteine + 3 H(+). In terms of biological role, methylates ribosomal protein L11. This Thermoanaerobacter sp. (strain X514) protein is Ribosomal protein L11 methyltransferase.